We begin with the raw amino-acid sequence, 197 residues long: MFNSIRNFLGFNEPEEYEEYYEGEIDNNDYHALYPAEMPTPLPEESAPAPRRLPENPTVASNFAMNSNTTPTRNNVIGLPGVSNSPAEVVVCEPHSFEEMPQIIQALRDRRSIVLNLNMMDPDEAQRAVDFVAGGTFAIDGHQERIGDSIFLFTPNCVQVTNSLSREETPATPAAPARPAAPAPAWSDEMTPMAQAQ.

Disordered stretches follow at residues 38-72 (MPTP…TTPT) and 164-197 (LSRE…AQAQ). A compositionally biased stretch (polar residues) spans 58 to 72 (TVASNFAMNSNTTPT). The segment covering 170 to 185 (PATPAAPARPAAPAPA) has biased composition (low complexity).

The protein belongs to the SepF family. As to quaternary structure, homodimer. Interacts with FtsZ.

Its subcellular location is the cytoplasm. Its function is as follows. Cell division protein that is part of the divisome complex and is recruited early to the Z-ring. Probably stimulates Z-ring formation, perhaps through the cross-linking of FtsZ protofilaments. Its function overlaps with FtsA. The sequence is that of Cell division protein SepF from Picosynechococcus sp. (strain ATCC 27264 / PCC 7002 / PR-6) (Agmenellum quadruplicatum).